Here is a 351-residue protein sequence, read N- to C-terminus: Cytosolic sulfotransferase 9 (351 aa).

The span at 1–11 shows a compositional bias: basic and acidic residues; it reads MDEKDILRNLR. Residues 1–24 form a disordered region; sequence MDEKDILRNLREEEEEEEENQSEE. Positions 12-22 are enriched in acidic residues; that stretch reads EEEEEEEENQS. 80–85 is a binding site for 3'-phosphoadenylyl sulfate; that stretch reads KSGTTW. His-152 functions as the Proton acceptor in the catalytic mechanism. Residues Arg-174, Ser-182, Tyr-252, and 317-319 contribute to the 3'-phosphoadenylyl sulfate site; that span reads RKG.

Belongs to the sulfotransferase 1 family. In terms of tissue distribution, expressed in roots and leaves.

The protein resides in the cytoplasm. Sulfotransferase that utilizes 3'-phospho-5'-adenylyl sulfate (PAPS) as sulfonate donor. No activity with brassinosteroids. The chain is Cytosolic sulfotransferase 9 (STO9) from Arabidopsis thaliana (Mouse-ear cress).